Here is a 376-residue protein sequence, read N- to C-terminus: N6-methyladenosine RNA methyltransferase MTA1 (376 aa).

Residues 53-78 (TRRLISSPPPETPFVTPEPKNGPSPL) are disordered.

Belongs to the MT-A70-like family.

It carries out the reaction an adenosine in mRNA + S-adenosyl-L-methionine = an N(6)-methyladenosine in mRNA + S-adenosyl-L-homocysteine + H(+). Functionally, N6-methyladenosine RNA methyltransferase that plays a crucial role in fungal phenotypic traits, virulence, and stress tolerance. Mediates the methylation of mRNAs to produce N6-methyladenosine (m6A)-containing mRNAs. M6A is a modification present at internal sites of mRNAs and some non-coding RNAs and plays a role in mRNA stability and processing. Required for appressorium turgor pressure and regulates autophagosome formation during appressorium formation stage. Specifically, mediates the stability of ATG8 mRNA in a m6A-dependent manner via modification of the m6A site A982 located in 3'UTR region. In Pyricularia oryzae (strain 70-15 / ATCC MYA-4617 / FGSC 8958) (Rice blast fungus), this protein is N6-methyladenosine RNA methyltransferase MTA1.